The following is a 126-amino-acid chain: MGPLGFVAVGVGAAAGAWLRWGFSVLWNAINPAMPYGTLAANLLGGYLIGLAVGFFDTHAGLPPEWRLLAITGFLGGLTTFSTFSSEVVANLIAGDYGWAAMHLLLHLGGSLLLTALGLWTYRMLA.

The next 4 helical transmembrane spans lie at 6–26, 36–56, 69–89, and 99–119; these read FVAVGVGAAAGAWLRWGFSVL, YGTLAANLLGGYLIGLAVGFF, LAITGFLGGLTTFSTFSSEVV, and WAAMHLLLHLGGSLLLTALGL. Na(+) contacts are provided by G76 and T79.

It belongs to the fluoride channel Fluc/FEX (TC 1.A.43) family.

The protein localises to the cell inner membrane. The catalysed reaction is fluoride(in) = fluoride(out). Na(+) is not transported, but it plays an essential structural role and its presence is essential for fluoride channel function. In terms of biological role, fluoride-specific ion channel. Important for reducing fluoride concentration in the cell, thus reducing its toxicity. The protein is Fluoride-specific ion channel FluC of Cupriavidus taiwanensis (strain DSM 17343 / BCRC 17206 / CCUG 44338 / CIP 107171 / LMG 19424 / R1) (Ralstonia taiwanensis (strain LMG 19424)).